Here is a 343-residue protein sequence, read N- to C-terminus: KRR1 small subunit processome component homolog (343 aa).

Residues 126–194 enclose the KH domain; it reads DIIKIGNLVH…VRDIVLETMN (69 aa). A compositionally biased stretch (basic residues) spans 230–246; sequence KNKNISKRKQPKNKKPK. A disordered region spans residues 230–343; sequence KNKNISKRKQ…LMKANKKNRS (114 aa). Composition is skewed to basic and acidic residues over residues 272–303 and 318–331; these read LNKE…RNKD and RPAE…DALK. A coiled-coil region spans residues 272–341; it reads LNKEQKQAKK…AKLMKANKKN (70 aa). The segment covering 333–343 has biased composition (basic residues); it reads KLMKANKKNRS.

This sequence belongs to the KRR1 family. As to quaternary structure, monomer. Component of the ribosomal small subunit (SSU) processome.

It is found in the nucleus. Its subcellular location is the nucleolus. Its function is as follows. Required for 40S ribosome biogenesis. Involved in nucleolar processing of pre-18S ribosomal RNA and ribosome assembly. Binds to RNA. Required for female germline development, cell viability during eye development and for survival of dividing cells and epithelial cells during early wing disk development. This chain is KRR1 small subunit processome component homolog, found in Drosophila virilis (Fruit fly).